Consider the following 418-residue polypeptide: MANKLRNYTINFGPQHPAAHGVLRMILELDGEQIVRADPHIGLLHRGTEKLAETKTYLQALPYMDRLDYVSMMVNEQAYCLAVEKLAGIDVPIRAQYIRVMFAEVTRILNHLMGIGSHAFDIGAMTAILYAFRDREELMDLYEAVSGARMHAAYFRPGGVYRDLPGFMPKYESSKFRNAKVLKQLNESREGTMLDFIDAFCERFPKNIDTLETLLTDNRIWKQRTVGIGVVSPERAMQKGFTGVMLRGSGVEWDVRKTQPYEVYDKMDFDIPVGVNGDCYDRYLCRMEEMRQSVRIIKQCADWLRVNPGPVITANHKFAPPKRTEMKTGMEDLIHHFKLFTEGMHVPEGETYTAVEHPKGEFGVYIISDGANKPYRLKIRAPGFAHLQGMDEMAKGHMLADVVAIIGTQDIVFGEVDR.

The protein belongs to the complex I 49 kDa subunit family. In terms of assembly, NDH-1 is composed of 14 different subunits. Subunits NuoB, C, D, E, F, and G constitute the peripheral sector of the complex.

The protein resides in the cell inner membrane. The catalysed reaction is a quinone + NADH + 5 H(+)(in) = a quinol + NAD(+) + 4 H(+)(out). NDH-1 shuttles electrons from NADH, via FMN and iron-sulfur (Fe-S) centers, to quinones in the respiratory chain. The immediate electron acceptor for the enzyme in this species is believed to be ubiquinone. Couples the redox reaction to proton translocation (for every two electrons transferred, four hydrogen ions are translocated across the cytoplasmic membrane), and thus conserves the redox energy in a proton gradient. This Neisseria gonorrhoeae (strain ATCC 700825 / FA 1090) protein is NADH-quinone oxidoreductase subunit D.